We begin with the raw amino-acid sequence, 69 residues long: DNA-directed RNA polymerase subunit epsilon (69 aa).

It belongs to the RNA polymerase subunit epsilon family. As to quaternary structure, RNAP is composed of a core of 2 alpha, a beta and a beta' subunit. The core is associated with a delta subunit, and at least one of epsilon or omega. When a sigma factor is associated with the core the holoenzyme is formed, which can initiate transcription.

The enzyme catalyses RNA(n) + a ribonucleoside 5'-triphosphate = RNA(n+1) + diphosphate. In terms of biological role, a non-essential component of RNA polymerase (RNAP). The sequence is that of DNA-directed RNA polymerase subunit epsilon from Bacillus pumilus (strain SAFR-032).